The primary structure comprises 231 residues: Large ribosomal subunit protein uL1 (231 aa).

It belongs to the universal ribosomal protein uL1 family. Part of the 50S ribosomal subunit.

Its function is as follows. Binds directly to 23S rRNA. The L1 stalk is quite mobile in the ribosome, and is involved in E site tRNA release. Protein L1 is also a translational repressor protein, it controls the translation of the L11 operon by binding to its mRNA. In Chlorobaculum tepidum (strain ATCC 49652 / DSM 12025 / NBRC 103806 / TLS) (Chlorobium tepidum), this protein is Large ribosomal subunit protein uL1.